We begin with the raw amino-acid sequence, 65 residues long: Large ribosomal subunit protein uL30 (65 aa).

The protein belongs to the universal ribosomal protein uL30 family. In terms of assembly, part of the 50S ribosomal subunit.

The sequence is that of Large ribosomal subunit protein uL30 from Onion yellows phytoplasma (strain OY-M).